Reading from the N-terminus, the 716-residue chain is Interleukin-31 receptor subunit alpha (716 aa).

An N-terminal signal peptide occupies residues 1-18; the sequence is MWTLALWAFSFLCKFSLA. Topologically, residues 19–499 are extracellular; it reads VLPTKPENIS…TNGVRINFKT (481 aa). 5 consecutive Fibronectin type-III domains span residues 23–115, 117–211, 213–304, 305–403, and 408–502; these read KPEN…IAKT, PPII…TMEE, PHVL…ILRI, PDVH…QAYA, and PLKG…TLSI. N-linked (GlcNAc...) asparagine glycans are attached at residues Asn-36, Asn-48, and Asn-64. N-linked (GlcNAc...) asparagine glycosylation occurs at Asn-382. The chain crosses the membrane as a helical span at residues 500 to 520; the sequence is LSISVFEIVLLTSLVGGGLLL. The Cytoplasmic segment spans residues 521–716; the sequence is LSIKTVTFGL…NIPEHSKGEV (196 aa). Disordered regions lie at residues 622 to 641 and 648 to 696; these read EYVT…FKEP and ASED…LKNS. Residues 670-679 are compositionally biased toward polar residues; the sequence is QPSSSCQSPG.

The protein belongs to the type I cytokine receptor family. Type 2 subfamily. As to quaternary structure, heterodimer with OSMR. Interacts with JAK1 and STAT3. Post-translationally, N-glycosylated. In terms of tissue distribution, expressed in a subset of dorsal root ganglia neurons. Expressed in spinal cord and trigeminal ganglion (at protein level). Expressed in skin, testis, bone marrow and thymus.

Its subcellular location is the cell membrane. It localises to the presynaptic cell membrane. The protein resides in the cell projection. It is found in the axon. Functionally, associates with OSMR to form the interleukin-31 receptor which activates STAT3 and to a lower extent STAT1 and STAT5. May function in skin immunity. Mediates IL31-induced itch, probably in a manner dependent on cation channels TRPA1 and TRPV1. Positively regulates numbers and cycling status of immature subsets of myeloid progenitor cells in bone marrow in vivo and enhances myeloid progenitor cell survival in vitro. This Mus musculus (Mouse) protein is Interleukin-31 receptor subunit alpha (Il31ra).